The chain runs to 183 residues: Segregation and condensation protein B (183 aa).

This sequence belongs to the ScpB family. Homodimer. Homodimerization may be required to stabilize the binding of ScpA to the Smc head domains. Component of a cohesin-like complex composed of ScpA, ScpB and the Smc homodimer, in which ScpA and ScpB bind to the head domain of Smc. The presence of the three proteins is required for the association of the complex with DNA.

It localises to the cytoplasm. Functionally, participates in chromosomal partition during cell division. May act via the formation of a condensin-like complex containing Smc and ScpA that pull DNA away from mid-cell into both cell halves. The protein is Segregation and condensation protein B of Streptococcus pyogenes serotype M1.